Consider the following 1057-residue polypeptide: MPKRNDIKTILVIGSGPIIIGQAAEFDYAGTQACLALKEEGYKVILVNSNPATIMTDTEIADKVYIEPLTLDFVSRIIRKEQPDALLPTLGGQTGLNMAVQLHEAGILEENNVTLLGTKLSSIEQAEDRDLFRNLMNELNEPVPESDIVNTVQQAIDFATSIGYPVIVRPAFTMGGTGGGICHDEKELVEIVTNGLKYSPVTQCLIEKSIAGYKEIEYEVMRDSNDNAIVVCNMENIDPVGIHTGDSIVVAPSQTLTDKEYHMLRDVSLKIIRALGIEGGCNVQLALDPHSFNYYIIEVNPRVSRSSALASKATGYPIAKLAAKIAVGLTLDEMMNPVTGTSYAAFEPALDYVVSKIPRFPFDKFEKGERVLGTQMKATGEVMAIGRTYEESLLKAIRSLEYGVHHLGLPNGEAFELDFIKQRIGEQDDERLFFIGEAIRRGVTLEEIHEMTQIDYFFLNKFQHIIDIEHDLKDNVGDIDHLIWAKKYGFSDKVIAHRWNMTEKEIYDIRHENHILPVYKMVDTCASEFESNTPYFYGTYETENESIRSDKKKVVVLGSGPIRIGQGVEFDYATVHAVWAIREAGYEAIIINNNPETVSTDFSISDKLYFEPLTEEDVMNIINLEQPEGVVVQFGGQTAINLAEKLTKYGVKVLGTSLENLDRAEDRKEFEALMQRIEIPQPLGKTATSVEEAVANADFIGYPVLVRPSYVLGGRAMEIVYNEEELINYMTQAVKASPEHPVLIDRYLTGKEIEVDAICDGETVVIPGIMEHIERAGVHSGDSIAVYPPQTLTEKQIATLEDYTKRLAHGLEIKGLLNIQYVISNDEVFVLEVNPRASRTVPFLSKITDVPMANLAMKAILGESLISKGYKDGLVPYKEGVYVKAPVFSFSKLKNVDITLGPEMKSTGEVMGKDITLEKALYKGLVASGLQVKDHGTVLITVADKDKAEALGLAKRFHEVGYRIMATSGTAKLLKENDIPVVEVSKIGNEFNLLDVIRDGHVQIVINTMTKGKQIERDGFQIRRDSVDNGVPCLTSLDTARALLEVIESMTFNMNQM.

The tract at residues 1–401 (MPKRNDIKTI…SLLKAIRSLE (401 aa)) is carboxyphosphate synthetic domain. Positions 129, 169, 175, 176, 208, 210, 215, 241, 242, 243, 284, and 298 each coordinate ATP. Positions 133–327 (RNLMNELNEP…IAKLAAKIAV (195 aa)) constitute an ATP-grasp 1 domain. Mg(2+) contacts are provided by Q284, E298, and N300. Mn(2+) is bound by residues Q284, E298, and N300. The interval 402-546 (YGVHHLGLPN…YGTYETENES (145 aa)) is oligomerization domain. The interval 547–929 (IRSDKKKVVV…ALYKGLVASG (383 aa)) is carbamoyl phosphate synthetic domain. One can recognise an ATP-grasp 2 domain in the interval 671–861 (EALMQRIEIP…MANLAMKAIL (191 aa)). ATP contacts are provided by R707, R746, L748, E752, G777, V778, H779, S780, Q820, and E832. Residues Q820, E832, and N834 each coordinate Mg(2+). Mn(2+) is bound by residues Q820, E832, and N834. Residues 930–1057 (LQVKDHGTVL…ESMTFNMNQM (128 aa)) enclose the MGS-like domain. Residues 930 to 1057 (LQVKDHGTVL…ESMTFNMNQM (128 aa)) form an allosteric domain region.

The protein belongs to the CarB family. In terms of assembly, composed of two chains; the small (or glutamine) chain promotes the hydrolysis of glutamine to ammonia, which is used by the large (or ammonia) chain to synthesize carbamoyl phosphate. Tetramer of heterodimers (alpha,beta)4. Mg(2+) serves as cofactor. Mn(2+) is required as a cofactor.

It carries out the reaction hydrogencarbonate + L-glutamine + 2 ATP + H2O = carbamoyl phosphate + L-glutamate + 2 ADP + phosphate + 2 H(+). The catalysed reaction is hydrogencarbonate + NH4(+) + 2 ATP = carbamoyl phosphate + 2 ADP + phosphate + 2 H(+). It participates in amino-acid biosynthesis; L-arginine biosynthesis; carbamoyl phosphate from bicarbonate: step 1/1. It functions in the pathway pyrimidine metabolism; UMP biosynthesis via de novo pathway; (S)-dihydroorotate from bicarbonate: step 1/3. In terms of biological role, large subunit of the glutamine-dependent carbamoyl phosphate synthetase (CPSase). CPSase catalyzes the formation of carbamoyl phosphate from the ammonia moiety of glutamine, carbonate, and phosphate donated by ATP, constituting the first step of 2 biosynthetic pathways, one leading to arginine and/or urea and the other to pyrimidine nucleotides. The large subunit (synthetase) binds the substrates ammonia (free or transferred from glutamine from the small subunit), hydrogencarbonate and ATP and carries out an ATP-coupled ligase reaction, activating hydrogencarbonate by forming carboxy phosphate which reacts with ammonia to form carbamoyl phosphate. The chain is Carbamoyl phosphate synthase large chain from Macrococcus caseolyticus (strain JCSC5402) (Macrococcoides caseolyticum).